A 951-amino-acid chain; its full sequence is Bifunctional glutamine synthetase adenylyltransferase/adenylyl-removing enzyme (951 aa).

Positions 1 to 440 (MLPLPSELQI…VFDDLIGDET (440 aa)) are adenylyl removase. Residues 449 to 951 (HGLYKSLWQD…WLAANDANVS (503 aa)) are adenylyl transferase.

The protein belongs to the GlnE family. Mg(2+) serves as cofactor.

It carries out the reaction [glutamine synthetase]-O(4)-(5'-adenylyl)-L-tyrosine + phosphate = [glutamine synthetase]-L-tyrosine + ADP. The enzyme catalyses [glutamine synthetase]-L-tyrosine + ATP = [glutamine synthetase]-O(4)-(5'-adenylyl)-L-tyrosine + diphosphate. Involved in the regulation of glutamine synthetase GlnA, a key enzyme in the process to assimilate ammonia. When cellular nitrogen levels are high, the C-terminal adenylyl transferase (AT) inactivates GlnA by covalent transfer of an adenylyl group from ATP to specific tyrosine residue of GlnA, thus reducing its activity. Conversely, when nitrogen levels are low, the N-terminal adenylyl removase (AR) activates GlnA by removing the adenylyl group by phosphorolysis, increasing its activity. The regulatory region of GlnE binds the signal transduction protein PII (GlnB) which indicates the nitrogen status of the cell. This chain is Bifunctional glutamine synthetase adenylyltransferase/adenylyl-removing enzyme, found in Yersinia pestis bv. Antiqua (strain Antiqua).